The primary structure comprises 530 residues: N-acetylmuramoyl-L-alanine amidase (530 aa).

Residues 1-22 form the signal peptide; that stretch reads MKAWGALWIVLGLLLWPEPGAA. 3 N-linked (GlcNAc...) asparagine glycosylation sites follow: N61, N80, and N174. Residue S219 is modified to Phosphoserine. Residue N335 is glycosylated (N-linked (GlcNAc...) asparagine). Residues 386–512 enclose the N-acetylmuramoyl-L-alanine amidase domain; the sequence is FLYVHHTYVP…RQLVLTHCPG (127 aa). Residue H390 participates in Zn(2+) binding. C399 and C405 are oxidised to a cystine. N465 carries N-linked (GlcNAc...) asparagine glycosylation. The Zn(2+) site is built by H502 and C510.

The protein belongs to the N-acetylmuramoyl-L-alanine amidase 2 family. Zn(2+) serves as cofactor. Strongly expressed in liver and fetal liver.

The protein resides in the secreted. It localises to the membrane. It carries out the reaction Hydrolyzes the link between N-acetylmuramoyl residues and L-amino acid residues in certain cell-wall glycopeptides.. May play a scavenger role by digesting biologically active peptidoglycan (PGN) into biologically inactive fragments. Has no direct bacteriolytic activity. The protein is N-acetylmuramoyl-L-alanine amidase (Pglyrp2) of Mus musculus (Mouse).